A 1269-amino-acid polypeptide reads, in one-letter code: Protein flightless-1 homolog (1269 aa).

Position 1 is an N-acetylmethionine (M1). The interaction with LRRFIP1 and LRRFIP2 stretch occupies residues M1–K427. LRR repeat units follow at residues L7–M32, T33–L55, Q56–L78, S80–L103, D104–A126, K127–N149, L150–L173, H175–A196, M197–L222, S223–L245, S247–W268, V269–L291, K293–L316, N318–C339, P340–T363, and I365–R385. Residue K21 is modified to N6-acetyllysine. S406 is modified (phosphoserine). Position 436 is a phosphoserine; by SGK3 (S436). The disordered stretch occupies residues V452–V473. The segment covering A453–D465 has biased composition (basic and acidic residues). Residues V495–E827 are interaction with ACTL6A. Gelsolin-like repeat units lie at residues F509 to L591, N629 to W703, and E758 to F831. At T818 the chain carries Phosphothreonine; by SGK3. Phosphoserine is present on residues S856 and S860. Residues K951–Q975 form a disordered region. A compositionally biased stretch (basic and acidic residues) spans K952–E965. Residues E966–Q975 are compositionally biased toward acidic residues. 2 Gelsolin-like repeats span residues T1075–F1143 and K1181–F1254.

As to quaternary structure, interacts with actin, ACTL6A, NCOA2 and CARM1. Interacts with LRRFIP1, LRRFIP2 and MYD88. Upon LPS stimulation, LRRFIP2 competes for MYD88-binding. LRRFIP1 constitutively blocks the interaction with MyD88, even in the absence of LPS. Interacts with the nuclear receptors ESR1 and THRB. Interacts with SGK3. Interacts (via the gelsolin-like region) with TMOD1. Interacts with (via the gelsolin-like region) TMOD3. Interacts with LMOD2, VCL, GSN and DES. In terms of tissue distribution, strongest expression in skeletal muscle with high expression also in the heart and lung.

It is found in the nucleus. Its subcellular location is the cytoplasm. It localises to the cytoskeleton. The protein resides in the microtubule organizing center. The protein localises to the centrosome. It is found in the cell projection. Its subcellular location is the podosome. It localises to the cell junction. The protein resides in the focal adhesion. Its function is as follows. Is a regulator of actin polymerization, required for proper myofibril organization and regulation of the length of sarcomeric thin filaments. It also plays a role in the assembly of cardiomyocyte cell adhesion complexes. Regulates cytoskeletal rearrangements involved in cytokinesis and cell migration, by inhibiting Rac1-dependent paxillin phosphorylation. May play a role as coactivator in transcriptional activation by hormone-activated nuclear receptors (NR) and acts in cooperation with NCOA2 and CARM1. Involved in estrogen hormone signaling. This is Protein flightless-1 homolog (FLII) from Homo sapiens (Human).